A 422-amino-acid chain; its full sequence is MNLVVLLILTLLLFIVSYVVDAGQVILVDSNITRSFVDMEADFSPSVTTVETGVVYVAEPLNACRNLRNKPEQSPYGTSPLVLIIRGGCSFEYKVRNAQRSGFKAAIVYDNVDRNFLSAMGGDSDGIKIQAVFVMKRAGEMLKKYAGSEEMEVMLVPPNTEDSVWSLYASIALILSLAIFCVMVTCVFFYRYCSTIRNSTSQFNGMCRRTVKAMPSVTFTCAKIDNTTGFSCAICLEDYIVGDKLRVLPCSHKFHVACVDSWLISWRTFCPVCKRDARTTADEPLATESTPFLSSSIATSSLVCIDSPPLGSSVSFSPAHVSSSFIHQFVRSSPMNGSRISENLRRQASPLQSSSQRSHLSMKSSHSLGYSTMSPLNAMGMSPYRPYPSNASPGLFSSTNHLLSNYTANTFSHFASAHSLPD.

A signal peptide spans 1–22; sequence MNLVVLLILTLLLFIVSYVVDA. Residues 23–168 are Lumenal-facing; it reads GQVILVDSNI…NTEDSVWSLY (146 aa). Asn31 is a glycosylation site (N-linked (GlcNAc...) asparagine). A disulfide bridge links Cys64 with Cys89. One can recognise a PA domain in the interval 81–146; that stretch reads LVLIIRGGCS…RAGEMLKKYA (66 aa). Residues 169–189 form a helical membrane-spanning segment; sequence ASIALILSLAIFCVMVTCVFF. The Cytoplasmic portion of the chain corresponds to 190–422; the sequence is YRYCSTIRNS…HFASAHSLPD (233 aa). The segment at 232 to 274 adopts an RING-type; atypical zinc-finger fold; the sequence is CAICLEDYIVGDKLRVLPCSHKFHVACVDSWLISWRTFCPVCK. The disordered stretch occupies residues 344-368; it reads LRRQASPLQSSSQRSHLSMKSSHSL. Residues 349–368 are compositionally biased toward polar residues; that stretch reads SPLQSSSQRSHLSMKSSHSL.

Its subcellular location is the prevacuolar compartment membrane. The protein localises to the protein storage vacuole membrane. In terms of biological role, involved in the trafficking of vacuolar proteins. May function as a sorting receptor for protein trafficking to the protein storage vacuole (PSV). This chain is Receptor homology region, transmembrane domain- and RING domain-containing protein 3 (RMR3), found in Arabidopsis thaliana (Mouse-ear cress).